We begin with the raw amino-acid sequence, 235 residues long: MTHQKRLSIPRSWKAGKKGYKWVSTTRPGPHSQARSLPLGIIIRDILKLVDNSREGKRILSEGKVLVDGIPRKDLRFPVGLFDVITLPLVNETYRMFQDEKGRLALHKLNATNVNKLCRINNKTTLKGGKVQLNLNDGTNILGSNEYSTKDSLILSLPDKQIVKHLQFKVGNLAMVVGGQHSGEIGKITEIREVKSSRHNTVAISGETDFETIEDYVIVIGEDKPEIRLGGEVIE.

Residues leucine 37–glutamate 100 enclose the S4 RNA-binding domain.

Belongs to the eukaryotic ribosomal protein eS4 family.

This chain is Small ribosomal subunit protein eS4, found in Methanosarcina barkeri (strain Fusaro / DSM 804).